Consider the following 449-residue polypeptide: Phosphomannomutase (449 aa).

Serine 97 acts as the Phosphoserine intermediate in catalysis. Mg(2+)-binding residues include serine 97, aspartate 237, aspartate 239, and aspartate 241.

Belongs to the phosphohexose mutase family. The cofactor is Mg(2+).

The enzyme catalyses alpha-D-mannose 1-phosphate = D-mannose 6-phosphate. The protein operates within amino-acid biosynthesis. In terms of biological role, catalyzes the formation of mannose-1-P from mannose-6-P. Can also use glucose-6-P. This is Phosphomannomutase (manB) from Methanocaldococcus jannaschii (strain ATCC 43067 / DSM 2661 / JAL-1 / JCM 10045 / NBRC 100440) (Methanococcus jannaschii).